Here is a 396-residue protein sequence, read N- to C-terminus: Tryptophan synthase beta chain (396 aa).

Lys86 bears the N6-(pyridoxal phosphate)lysine mark.

It belongs to the TrpB family. Tetramer of two alpha and two beta chains. It depends on pyridoxal 5'-phosphate as a cofactor.

It carries out the reaction (1S,2R)-1-C-(indol-3-yl)glycerol 3-phosphate + L-serine = D-glyceraldehyde 3-phosphate + L-tryptophan + H2O. Its pathway is amino-acid biosynthesis; L-tryptophan biosynthesis; L-tryptophan from chorismate: step 5/5. The beta subunit is responsible for the synthesis of L-tryptophan from indole and L-serine. The polypeptide is Tryptophan synthase beta chain (Aliivibrio fischeri (strain MJ11) (Vibrio fischeri)).